Reading from the N-terminus, the 275-residue chain is Hydroxyethylthiazole kinase (275 aa).

M50 provides a ligand contact to substrate. Residues R126 and S171 each contribute to the ATP site. Residue A200 coordinates substrate.

This sequence belongs to the Thz kinase family. Requires Mg(2+) as cofactor.

It carries out the reaction 5-(2-hydroxyethyl)-4-methylthiazole + ATP = 4-methyl-5-(2-phosphooxyethyl)-thiazole + ADP + H(+). The protein operates within cofactor biosynthesis; thiamine diphosphate biosynthesis; 4-methyl-5-(2-phosphoethyl)-thiazole from 5-(2-hydroxyethyl)-4-methylthiazole: step 1/1. Its function is as follows. Catalyzes the phosphorylation of the hydroxyl group of 4-methyl-5-beta-hydroxyethylthiazole (THZ). In Acinetobacter baumannii (strain AB307-0294), this protein is Hydroxyethylthiazole kinase.